Here is a 537-residue protein sequence, read N- to C-terminus: Putative cysteine ligase BshC (537 aa).

Positions E415 to L439 form a coiled coil.

The protein belongs to the BshC family.

In terms of biological role, involved in bacillithiol (BSH) biosynthesis. May catalyze the last step of the pathway, the addition of cysteine to glucosamine malate (GlcN-Mal) to generate BSH. The protein is Putative cysteine ligase BshC of Staphylococcus epidermidis (strain ATCC 12228 / FDA PCI 1200).